We begin with the raw amino-acid sequence, 375 residues long: Queuine tRNA-ribosyltransferase (375 aa).

D90 functions as the Proton acceptor in the catalytic mechanism. Residues 90–94 (DSGGF), D144, Q190, and G217 contribute to the substrate site. Positions 248–254 (GIGTPHY) are RNA binding. Residue D267 is the Nucleophile of the active site. The interval 272–276 (ARITR) is RNA binding; important for wobble base 34 recognition. Residues C305, C307, C310, and H336 each contribute to the Zn(2+) site.

Belongs to the queuine tRNA-ribosyltransferase family. Homodimer. Within each dimer, one monomer is responsible for RNA recognition and catalysis, while the other monomer binds to the replacement base PreQ1. Zn(2+) serves as cofactor.

It catalyses the reaction 7-aminomethyl-7-carbaguanine + guanosine(34) in tRNA = 7-aminomethyl-7-carbaguanosine(34) in tRNA + guanine. It functions in the pathway tRNA modification; tRNA-queuosine biosynthesis. Catalyzes the base-exchange of a guanine (G) residue with the queuine precursor 7-aminomethyl-7-deazaguanine (PreQ1) at position 34 (anticodon wobble position) in tRNAs with GU(N) anticodons (tRNA-Asp, -Asn, -His and -Tyr). Catalysis occurs through a double-displacement mechanism. The nucleophile active site attacks the C1' of nucleotide 34 to detach the guanine base from the RNA, forming a covalent enzyme-RNA intermediate. The proton acceptor active site deprotonates the incoming PreQ1, allowing a nucleophilic attack on the C1' of the ribose to form the product. After dissociation, two additional enzymatic reactions on the tRNA convert PreQ1 to queuine (Q), resulting in the hypermodified nucleoside queuosine (7-(((4,5-cis-dihydroxy-2-cyclopenten-1-yl)amino)methyl)-7-deazaguanosine). This Borreliella burgdorferi (strain ATCC 35210 / DSM 4680 / CIP 102532 / B31) (Borrelia burgdorferi) protein is Queuine tRNA-ribosyltransferase.